The chain runs to 319 residues: Taste receptor type 2 member 30 (319 aa).

Position 1 (methionine 1) is a topological domain, extracellular. Residues 2–22 traverse the membrane as a helical segment; it reads ITFLPIIFSILIVVIFVIGNF. At 23–46 the chain is on the cytoplasmic side; it reads ANGFIALVNSIEWVKRQKISFADQ. The chain crosses the membrane as a helical span at residues 47–67; it reads ILIALAVSRVGLLWALLLHWY. Topologically, residues 68-86 are extracellular; it reads ATELNLAFYSVEVRITAYN. A helical transmembrane segment spans residues 87 to 107; that stretch reads VWAVTNHFSNWLATSLSMFYL. At 108–126 the chain is on the cytoplasmic side; the sequence is LKIANFSNLIFLRIKRRVK. The helical transmembrane segment at 127 to 147 threads the bilayer; it reads SVILVILLGPLLFLVCHLFVI. Topologically, residues 148 to 178 are extracellular; it reads NMNEIVWTKEYEGNLTWKIKLRNAVFLSNMT. Residues asparagine 161 and asparagine 176 are each glycosylated (N-linked (GlcNAc...) asparagine). The chain crosses the membrane as a helical span at residues 179-199; the sequence is LTMLANFVPLTLTLISFLLLI. The Cytoplasmic segment spans residues 200-229; the sequence is CSLCKHLKKMQLHGKGSQDPSTKVHIKALQ. A helical membrane pass occupies residues 230 to 250; sequence TVTCFLLLCAIYFLSMIISVY. Topologically, residues 251 to 259 are extracellular; that stretch reads NFGRLEKKP. A helical transmembrane segment spans residues 260 to 280; sequence VFMFCQAITFSYPSTHAFILI. Over 281–319 the chain is Cytoplasmic; it reads WGNKKLKQIFLSVLWHVRYWVKDRSLRLHRFTRAALCKG.

It belongs to the G-protein coupled receptor T2R family.

It is found in the membrane. Its function is as follows. Receptor that may play a role in the perception of bitterness and is gustducin-linked. May play a role in sensing the chemical composition of the gastrointestinal content. The activity of this receptor may stimulate alpha gustducin, mediate PLC-beta-2 activation and lead to the gating of TRPM5. The chain is Taste receptor type 2 member 30 (TAS2R30) from Pongo pygmaeus (Bornean orangutan).